The following is a 295-amino-acid chain: Protoheme IX farnesyltransferase (295 aa).

The next 9 helical transmembrane spans lie at 27–47 (IMYLVVLTGITGMIIAPGNIH), 48–68 (PFIGIISTLCIALGSGAAGAI), 93–115 (IARSTAIELGLVLSVISVTVMMI), 119–136 (YLSGILLAISIGFYSLVY), 147–167 (NIVIGGIAGALPPIIGWTSVT), 175–195 (LILFLIIFVWTPPHFWALSLL), 219–239 (IYILVYSIILFIITLLPGIFL), 247–267 (TCAIPLGMTFVFHAFKVFVSI), and 275–295 (MFTYSIAYLFILFICIIISSF).

The protein belongs to the UbiA prenyltransferase family. Protoheme IX farnesyltransferase subfamily.

The protein localises to the cell inner membrane. The enzyme catalyses heme b + (2E,6E)-farnesyl diphosphate + H2O = Fe(II)-heme o + diphosphate. It functions in the pathway porphyrin-containing compound metabolism; heme O biosynthesis; heme O from protoheme: step 1/1. Functionally, converts heme B (protoheme IX) to heme O by substitution of the vinyl group on carbon 2 of heme B porphyrin ring with a hydroxyethyl farnesyl side group. This is Protoheme IX farnesyltransferase from Ehrlichia chaffeensis (strain ATCC CRL-10679 / Arkansas).